Reading from the N-terminus, the 112-residue chain is Putative UPF0320 protein YEL074W (112 aa).

Positions 93–112 (EKSPSKSPKHKNILPFNFTK) are disordered.

This sequence belongs to the UPF0320 family.

This Saccharomyces cerevisiae (strain ATCC 204508 / S288c) (Baker's yeast) protein is Putative UPF0320 protein YEL074W.